We begin with the raw amino-acid sequence, 545 residues long: Glutamine-dependent NAD(+) synthetase (545 aa).

A CN hydrolase domain is found at 5–247; sequence LRIAMAQFDF…DQWLVVDYMR (243 aa). Glu-46 (proton acceptor; for glutaminase activity) is an active-site residue. Lys-113 functions as the For glutaminase activity in the catalytic mechanism. Tyr-119 is a binding site for L-glutamine. The active-site Nucleophile; for glutaminase activity is the Cys-151. L-glutamine contacts are provided by Ser-177 and Lys-183. The segment at 269–545 is ligase; that stretch reads VWRAVVRGVQ…RYPISNAYRG (277 aa). 292-299 lines the ATP pocket; the sequence is GLSGGIDS. Asn-375 is a deamido-NAD(+) binding site. An ATP-binding site is contributed by Thr-399. Residues Glu-404 and Lys-516 each contribute to the deamido-NAD(+) site.

This sequence in the C-terminal section; belongs to the NAD synthetase family.

The catalysed reaction is deamido-NAD(+) + L-glutamine + ATP + H2O = L-glutamate + AMP + diphosphate + NAD(+) + H(+). The protein operates within cofactor biosynthesis; NAD(+) biosynthesis; NAD(+) from deamido-NAD(+) (L-Gln route): step 1/1. Functionally, catalyzes the ATP-dependent amidation of deamido-NAD to form NAD. Uses L-glutamine as a nitrogen source. The chain is Glutamine-dependent NAD(+) synthetase from Xylella fastidiosa (strain 9a5c).